Here is a 130-residue protein sequence, read N- to C-terminus: Con-Ins G2 (130 aa).

Positions 1-24 are cleaved as a signal peptide; it reads MTTSSYFLLVALGLLLYVRQSFST. 4 disulfide bridges follow: Cys-29–Cys-100, Cys-41–Cys-103, Cys-53–Cys-116, and Cys-102–Cys-107. Residue Pro-34 is modified to 4-hydroxyproline; partial. Residues 54–74 form a disordered region; sequence EEEEARRGGTNDGGKKRRRAS. The propeptide at 59–92 is c peptide; it reads RRGGTNDGGKKRRRASPLWKRRRFLSMLKARAKR. Glu-111 carries the post-translational modification 4-carboxyglutamate; partial.

The protein belongs to the insulin family. As to quaternary structure, heterodimer of A and B chains; disulfide-linked. Expressed by the venom gland.

It is found in the secreted. Functionally, this venom insulin, from a fish-hunting cone snail, facilitates prey capture by rapidly inducing hypoglycemic shock. Intraperitoneal injection of this peptide into zebrafish lowers blood glucose with the same potency than human insulin. In vivo, when applied to water, this peptide reduces overall locomotor activity of zebrafish larvae, observed as a significant decrease in the percentage of time spent swimming and movement frequency. The protein is Con-Ins G2 of Conus geographus (Geography cone).